The sequence spans 71 residues: MPAVKVKENEPFDVALRRFKRSCEKAGVLAEVRSREFYEKPTAERKRKAAAAVKRHAKKVQREQRRSVRLY.

Positions Ala49–Lys59 are enriched in basic residues. The disordered stretch occupies residues Ala49–Tyr71. The span at Val60 to Tyr71 shows a compositional bias: basic and acidic residues.

This sequence belongs to the bacterial ribosomal protein bS21 family.

This Stutzerimonas stutzeri (strain A1501) (Pseudomonas stutzeri) protein is Small ribosomal subunit protein bS21.